Consider the following 263-residue polypeptide: Putative hydro-lyase Psyc_1103 (263 aa).

The protein belongs to the D-glutamate cyclase family.

The chain is Putative hydro-lyase Psyc_1103 from Psychrobacter arcticus (strain DSM 17307 / VKM B-2377 / 273-4).